The chain runs to 397 residues: Major outer membrane porin, serovar C (397 aa).

A signal peptide spans 1 to 22; the sequence is MKKLLKSVLVFAALSSASSLQA.

This sequence belongs to the chlamydial porin (CP) (TC 1.B.2) family. Part of a disulfide cross-linked outer membrane complex (COMC) composed of the major outer membrane porin (MOMP), the small cysteine-rich protein (OmcA) and the large cysteine-rich periplasmic protein (OmcB).

It is found in the cell outer membrane. In terms of biological role, in elementary bodies (EBs, the infectious stage, which is able to survive outside the host cell) provides the structural integrity of the outer envelope through disulfide cross-links with the small cysteine-rich protein and the large cysteine-rich periplasmic protein. It has been described in publications as the Sarkosyl-insoluble COMC (Chlamydia outer membrane complex), and serves as the functional equivalent of peptidoglycan. Permits diffusion of specific solutes through the outer membrane. The protein is Major outer membrane porin, serovar C (ompA) of Chlamydia trachomatis.